The sequence spans 108 residues: MNDIIKKIQNQIQNNPIIIYMKGSPDAPSCGFSAQAVHAISSCGKKFAYIDVLKNPDIRLELPKYANWPTFPQLWVNGELIGGCNIILELFQKGELKKTISICDKLNS.

The Glutaredoxin domain maps to 5-107 (IKKIQNQIQN…KTISICDKLN (103 aa)). A glutathione-binding site is contributed by lysine 22. Cysteine 30 lines the [2Fe-2S] cluster pocket. Residues arginine 59, phenylalanine 71, and 84-85 (CN) each bind glutathione.

This sequence belongs to the glutaredoxin family. Monothiol subfamily. Homodimer.

The protein resides in the cytoplasm. Monothiol glutaredoxin involved in the biogenesis of iron-sulfur clusters. The sequence is that of Glutaredoxin 4 (grxD) from Buchnera aphidicola subsp. Baizongia pistaciae (strain Bp).